Reading from the N-terminus, the 251-residue chain is Aspartate/glutamate leucyltransferase (251 aa).

This sequence belongs to the R-transferase family. Bpt subfamily.

The protein resides in the cytoplasm. It carries out the reaction N-terminal L-glutamyl-[protein] + L-leucyl-tRNA(Leu) = N-terminal L-leucyl-L-glutamyl-[protein] + tRNA(Leu) + H(+). The catalysed reaction is N-terminal L-aspartyl-[protein] + L-leucyl-tRNA(Leu) = N-terminal L-leucyl-L-aspartyl-[protein] + tRNA(Leu) + H(+). Functions in the N-end rule pathway of protein degradation where it conjugates Leu from its aminoacyl-tRNA to the N-termini of proteins containing an N-terminal aspartate or glutamate. The sequence is that of Aspartate/glutamate leucyltransferase from Xanthomonas oryzae pv. oryzae (strain MAFF 311018).